Here is a 147-residue protein sequence, read N- to C-terminus: Ribonuclease pancreatic gamma-type (147 aa).

Positions 1-25 (MGLEKSFLLFSLLVLVLGWVQPSLG) are cleaved as a signal peptide. Substrate is bound by residues Lys35 and Arg38. His40 serves as the catalytic Proton acceptor. Disulfide bonds link Cys54–Cys112, Cys68–Cys123, Cys86–Cys138, and Cys93–Cys100. Residues 69 to 73 (KPMNT), Lys94, and Arg113 each bind substrate. The active-site Proton donor is the His142.

The protein belongs to the pancreatic ribonuclease family. Monomer.

It is found in the secreted. The enzyme catalyses an [RNA] containing cytidine + H2O = an [RNA]-3'-cytidine-3'-phosphate + a 5'-hydroxy-ribonucleotide-3'-[RNA].. It carries out the reaction an [RNA] containing uridine + H2O = an [RNA]-3'-uridine-3'-phosphate + a 5'-hydroxy-ribonucleotide-3'-[RNA].. Functionally, endonuclease that catalyzes the cleavage of RNA on the 3' side of pyrimidine nucleotides. Acts on single-stranded and double-stranded RNA. In Rattus rattus (Black rat), this protein is Ribonuclease pancreatic gamma-type.